A 63-amino-acid chain; its full sequence is DNA gyrase inhibitor YacG (63 aa).

Residues Cys10, Cys13, Cys29, and Cys33 each coordinate Zn(2+).

Belongs to the DNA gyrase inhibitor YacG family. As to quaternary structure, interacts with GyrB. The cofactor is Zn(2+).

Inhibits all the catalytic activities of DNA gyrase by preventing its interaction with DNA. Acts by binding directly to the C-terminal domain of GyrB, which probably disrupts DNA binding by the gyrase. The sequence is that of DNA gyrase inhibitor YacG from Chromobacterium violaceum (strain ATCC 12472 / DSM 30191 / JCM 1249 / CCUG 213 / NBRC 12614 / NCIMB 9131 / NCTC 9757 / MK).